We begin with the raw amino-acid sequence, 225 residues long: ATP-dependent dethiobiotin synthetase BioD 1 (225 aa).

2 residues coordinate Mg(2+): glutamate 13 and threonine 17. Glutamate 13 to valine 18 is a binding site for ATP. Lysine 38 is a catalytic residue. Serine 42 contacts substrate. Positions 55 and 116 each coordinate Mg(2+). Residues aspartate 55, glutamate 116–glycine 119, and asparagine 176–aspartate 177 each bind ATP. Tyrosine 188 provides a ligand contact to substrate. Residues proline 205 to leucine 207 and glutamate 212 contribute to the ATP site.

This sequence belongs to the dethiobiotin synthetase family. Homodimer. Mg(2+) serves as cofactor.

The protein resides in the cytoplasm. The catalysed reaction is (7R,8S)-7,8-diammoniononanoate + CO2 + ATP = (4R,5S)-dethiobiotin + ADP + phosphate + 3 H(+). It participates in cofactor biosynthesis; biotin biosynthesis; biotin from 7,8-diaminononanoate: step 1/2. Catalyzes a mechanistically unusual reaction, the ATP-dependent insertion of CO2 between the N7 and N8 nitrogen atoms of 7,8-diaminopelargonic acid (DAPA, also called 7,8-diammoniononanoate) to form a ureido ring. Only CTP can partially replace ATP while diaminobiotin is only 37% as effective as 7,8-diaminopelargonic acid. In another study both CTP and GTP (but not ITP, TTP or UTP) can partially replace ATP. This Escherichia coli (strain K12) protein is ATP-dependent dethiobiotin synthetase BioD 1.